A 63-amino-acid polypeptide reads, in one-letter code: Conotoxin PnMRCL-0111 (63 aa).

The N-terminal stretch at 1 to 19 is a signal peptide; sequence MRCLPVFIVLLLLIVSAPG. The propeptide occupies 20 to 49; it reads FDARPKTEDDVPLSSFHDDLQRTVRTLLDI. Tryptophan 62 carries the tryptophan amide modification.

This sequence belongs to the conotoxin T superfamily. In terms of processing, contains 2 disulfide bonds that can be either 'C1-C3, C2-C4' or 'C1-C4, C2-C3', since these disulfide connectivities have been observed for conotoxins with cysteine framework V (for examples, see AC P0DQQ7 and AC P81755). Expressed by the venom duct.

Its subcellular location is the secreted. The chain is Conotoxin PnMRCL-0111 from Conus pennaceus (Feathered cone).